The sequence spans 407 residues: Steroid 3-ketoacyl-CoA thiolase FadA6 (407 aa).

Catalysis depends on Cys-110, which acts as the Acyl-thioester intermediate. Residues Gln-178, 237-239, and Ser-262 each bind CoA; that span reads RES. Active-site proton acceptor residues include His-363 and Cys-393. Gly-395 provides a ligand contact to substrate.

The protein belongs to the thiolase-like superfamily. Thiolase family.

The catalysed reaction is an acyl-CoA + acetyl-CoA = a 3-oxoacyl-CoA + CoA. The enzyme catalyses 6-methyl-3,7-dioxodecanedioyl-CoA + CoA = 4-methyl-5-oxo-octanedioyl-CoA + acetyl-CoA. Its pathway is steroid metabolism; cholesterol degradation. Functionally, may be involved in the final steps of cholesterol and steroid degradation. Catalyzes the formation of 4-methyl-5-oxo-octanedioyl-CoA (MOODA-CoA) and acetyl-CoA from 6-methyl-3,7-dioxodecanedioyl-CoA (MeDODA-CoA) and coenzyme A. The chain is Steroid 3-ketoacyl-CoA thiolase FadA6 from Mycobacterium tuberculosis (strain ATCC 25618 / H37Rv).